We begin with the raw amino-acid sequence, 507 residues long: Putative propionyl-CoA carboxylase beta chain (507 aa).

Over residues 1–25 (MNEHMDHFYTKRKQAEEGGGREKLA) the composition is skewed to basic and acidic residues. Residues 1-30 (MNEHMDHFYTKRKQAEEGGGREKLAQQRQK) are disordered. The 254-residue stretch at 1–254 (MNEHMDHFYT…NGRTTEPKPE (254 aa)) folds into the CoA carboxyltransferase N-terminal domain. The interval 1–501 (MNEHMDHFYT…HKTEERPKKK (501 aa)) is carboxyltransferase. Residues 256-501 (EASRPLLNRL…HKTEERPKKK (246 aa)) enclose the CoA carboxyltransferase C-terminal domain.

This sequence belongs to the AccD/PCCB family. Probably a dodecamer composed of six biotin-containing alpha subunits and six beta subunits.

It carries out the reaction propanoyl-CoA + hydrogencarbonate + ATP = (S)-methylmalonyl-CoA + ADP + phosphate + H(+). Its pathway is metabolic intermediate metabolism; propanoyl-CoA degradation; succinyl-CoA from propanoyl-CoA: step 1/3. This Bacillus subtilis (strain 168) protein is Putative propionyl-CoA carboxylase beta chain (yqjD).